The sequence spans 514 residues: Membrane-bound lytic murein transglycosylase F (514 aa).

The signal sequence occupies residues 1-30 (MKKLKINYLFIGILTLLLAAALWPSIPWFG). A non-LT domain region spans residues 31–269 (KTENHIAAIQ…RIEEKYLGHG (239 aa)). Residues 270–514 (DDFDYVDTRS…LFTPQKKEEK (245 aa)) form an LT domain region. Residue glutamate 314 is part of the active site.

It in the N-terminal section; belongs to the bacterial solute-binding protein 3 family. The protein in the C-terminal section; belongs to the transglycosylase Slt family.

It localises to the cell outer membrane. The catalysed reaction is Exolytic cleavage of the (1-&gt;4)-beta-glycosidic linkage between N-acetylmuramic acid (MurNAc) and N-acetylglucosamine (GlcNAc) residues in peptidoglycan, from either the reducing or the non-reducing ends of the peptidoglycan chains, with concomitant formation of a 1,6-anhydrobond in the MurNAc residue.. Its function is as follows. Murein-degrading enzyme that degrades murein glycan strands and insoluble, high-molecular weight murein sacculi, with the concomitant formation of a 1,6-anhydromuramoyl product. Lytic transglycosylases (LTs) play an integral role in the metabolism of the peptidoglycan (PG) sacculus. Their lytic action creates space within the PG sacculus to allow for its expansion as well as for the insertion of various structures such as secretion systems and flagella. The sequence is that of Membrane-bound lytic murein transglycosylase F from Salmonella paratyphi B (strain ATCC BAA-1250 / SPB7).